The sequence spans 396 residues: Odorant receptor 49a (396 aa).

The Cytoplasmic portion of the chain corresponds to 1–6 (MEKLRS). Residues 7–27 (YEDFIFMANMMFKTLGYDLFH) traverse the membrane as a helical segment. At 28 to 34 (TPKPWWR) the chain is on the extracellular side. Residues 35 to 55 (YLLVRGYFVLCTISNFYEASM) traverse the membrane as a helical segment. The Cytoplasmic segment spans residues 56 to 70 (VTTRIIEWESLAGSP). Residues 71 to 91 (SKIMRQGLHFFYMLSSQLKFI) traverse the membrane as a helical segment. Topologically, residues 92 to 141 (TFMINRKRLLQLSHRLKELYPHKEQNQRKYEVNKYYLSCSTRNVLYVYYF) are extracellular. A helical membrane pass occupies residues 142–162 (VMVVMALEPLVQSCIMYLIGF). At 163-209 (GKADFTYKRIFPTRLTFDSEKPLGYVLAYVIDFTYSQFIVNVSLGTD) the chain is on the cytoplasmic side. The helical transmembrane segment at 210-230 (LWMMCVSSQISMHLGYLANML) threads the bilayer. The Extracellular portion of the chain corresponds to 231 to 266 (ASIRPSPETEQQDCDFLASIIKRHQLMIRLQKDVNY). A helical membrane pass occupies residues 267–287 (VFGLLLASNLFTTSCLLCCMA). Residues 288-296 (YYTVVEGFN) lie on the Cytoplasmic side of the membrane. A helical membrane pass occupies residues 297–317 (WEGISYMMLFASVAAQFYVVS). Over 318 to 396 (SHGQMLIDLS…FAVIRQTVEK (79 aa)) the chain is Extracellular.

Belongs to the insect chemoreceptor superfamily. Heteromeric odorant receptor channel (TC 1.A.69) family. Or49a subfamily. As to quaternary structure, interacts with Orco. Complexes exist early in the endomembrane system in olfactory sensory neurons (OSNs), coupling these complexes to the conserved ciliary trafficking pathway.

The protein localises to the cell membrane. Its function is as follows. Odorant receptor which mediates acceptance or avoidance behavior, depending on its substrates. The odorant receptor repertoire encodes a large collection of odor stimuli that vary widely in identity, intensity, and duration. May form a complex with Orco to form odorant-sensing units, providing sensitive and prolonged odorant signaling and calcium permeability. Involved in the behavioral responses to butanol and 2-heptanone. The polypeptide is Odorant receptor 49a (Or49a) (Drosophila melanogaster (Fruit fly)).